Reading from the N-terminus, the 1233-residue chain is ATP-dependent helicase/nuclease subunit A (1233 aa).

A UvrD-like helicase ATP-binding domain is found at 3-474; that stretch reads TKWTEEQKQA…ILLYKNFRSR (472 aa). 24-31 is a binding site for ATP; sequence AAAGSGKT. In terms of domain architecture, UvrD-like helicase C-terminal spans 518–809; sequence VTGGAVELHL…RIMSIHKSKG (292 aa). The interval 533–555 is disordered; sequence VEEEVEEKEEEKNEEKDFEEEEE.

It belongs to the helicase family. AddA subfamily. As to quaternary structure, heterodimer of AddA and AddB/RexB. Mg(2+) serves as cofactor.

The catalysed reaction is Couples ATP hydrolysis with the unwinding of duplex DNA by translocating in the 3'-5' direction.. It catalyses the reaction ATP + H2O = ADP + phosphate + H(+). In terms of biological role, the heterodimer acts as both an ATP-dependent DNA helicase and an ATP-dependent, dual-direction single-stranded exonuclease. Recognizes the chi site generating a DNA molecule suitable for the initiation of homologous recombination. The AddA nuclease domain is required for chi fragment generation; this subunit has the helicase and 3' -&gt; 5' nuclease activities. The protein is ATP-dependent helicase/nuclease subunit A of Thermoanaerobacter sp. (strain X514).